Reading from the N-terminus, the 362-residue chain is Large ribosomal subunit protein uL4A (362 aa).

N-acetylserine is present on serine 2. Arginine 95 carries the post-translational modification Omega-N-methylarginine. The tract at residues 277-362 is C-terminal-extended nuclear localization signal; sequence PSHIISTSDV…AVFTETLKHD (86 aa).

This sequence belongs to the universal ribosomal protein uL4 family. Component of the large ribosomal subunit (LSU). Mature yeast ribosomes consist of a small (40S) and a large (60S) subunit. The 40S small subunit contains 1 molecule of ribosomal RNA (18S rRNA) and 33 different proteins (encoded by 57 genes). The large 60S subunit contains 3 rRNA molecules (25S, 5.8S and 5S rRNA) and 46 different proteins (encoded by 81 genes). uL4 is associated with the polypeptide exit tunnel. uL4 interacts with its chaperone ACL4 and the nuclear import receptor KAP104. In terms of processing, N-terminally acetylated by acetyltransferase NatA.

The protein resides in the cytoplasm. The protein localises to the nucleus. In terms of biological role, component of the ribosome, a large ribonucleoprotein complex responsible for the synthesis of proteins in the cell. The small ribosomal subunit (SSU) binds messenger RNAs (mRNAs) and translates the encoded message by selecting cognate aminoacyl-transfer RNA (tRNA) molecules. The large subunit (LSU) contains the ribosomal catalytic site termed the peptidyl transferase center (PTC), which catalyzes the formation of peptide bonds, thereby polymerizing the amino acids delivered by tRNAs into a polypeptide chain. The nascent polypeptides leave the ribosome through a tunnel in the LSU and interact with protein factors that function in enzymatic processing, targeting, and the membrane insertion of nascent chains at the exit of the ribosomal tunnel. uL4 participates in the regulation of the accumulation of its own mRNA. In Saccharomyces cerevisiae (strain ATCC 204508 / S288c) (Baker's yeast), this protein is Large ribosomal subunit protein uL4A.